An 868-amino-acid chain; its full sequence is Envelope glycoprotein gp160 (868 aa).

An N-terminal signal peptide occupies residues 1–33; sequence MAMRAKGIRKNCQHLWRWGTMLLGMLMICSAAA. Residues 34–696 are Extracellular-facing; it reads NLWVTVYYGV…ITKWLWYIKI (663 aa). Cysteines 55 and 75 form a disulfide. Residues N89, N131, N138, N139, N142, N162, N166, N195, N198, N208, N245, N252, N273, N287, N300, N306, N312, N342, N349, N365, and N371 are each glycosylated (N-linked (GlcNAc...) asparagine; by host). Cystine bridges form between C120-C216, C127-C207, C132-C163, C229-C258, and C239-C250. The interval 132-162 is V1; that stretch reads CTDLNTNNTTNTTELSIIVVWEQRGKGEMRN. The tract at residues 163-207 is V2; it reads CSFNITTSIRDKVQREYALFYKLDVEPIDDNKNTTNNTKYRLINC. A V3 region spans residues 307-340; sequence CTRPNNHTRKRVTLGPGRVWYTTGEILGNIRQAH. A disulfide bridge links C307 with C341. The tract at residues 373–383 is CD4-binding loop; sequence SSGGDPEIVMH. 2 cysteine pairs are disulfide-bonded: C387-C456 and C394-C429. The segment at 394 to 429 is V4; it reads CNSTQLFNSAWNVTSNGTWSVTRKQKDTGDIITLPC. N-linked (GlcNAc...) asparagine; by host glycosylation is found at N395, N405, N409, N459, and N473. V5 regions lie at residues 472–482 and 474–482; these read ENQTTEIFRPG and QTTEIFRPG. Residues 523 to 544 form a fusion peptide region; the sequence is AVGMLGAMFLGFLGAAGSTMGA. Residues 586–604 are immunosuppression; it reads KQLQARILAVERYLKDQQL. Residues C610 and C616 are joined by a disulfide bond. Residues N623, N628, N637, and N649 are each glycosylated (N-linked (GlcNAc...) asparagine; by host). Positions 645 to 679 form a coiled coil; it reads REIDNYTHLIYTLIEESQNQQEKNQQELLQLDKWA. The interval 674–695 is MPER; binding to GalCer; the sequence is QLDKWASLWTWSDITKWLWYIK. A helical transmembrane segment spans residues 697 to 717; sequence FIMIVGGLIGLRIVFAVLSIV. The Cytoplasmic segment spans residues 718–868; it reads NRVRQGYSPL…IRQGFERALL (151 aa). Positions 724-727 match the YXXL motif; contains endocytosis signal motif; the sequence is YSPL. The tract at residues 731 to 755 is disordered; it reads TLLPNPRGPDRPEGTEEGGGERGRD. Positions 738 to 755 are enriched in basic and acidic residues; it reads GPDRPEGTEEGGGERGRD. A lipid anchor (S-palmitoyl cysteine; by host) is attached at C776. Positions 867–868 match the Di-leucine internalization motif motif; it reads LL.

The protein belongs to the HIV-1 env protein family. In terms of assembly, the mature envelope protein (Env) consists of a homotrimer of non-covalently associated gp120-gp41 heterodimers. The resulting complex protrudes from the virus surface as a spike. There seems to be as few as 10 spikes on the average virion. Interacts with host CD4, CCR5 and CXCR4. Gp120 also interacts with the C-type lectins CD209/DC-SIGN and CLEC4M/DC-SIGNR (collectively referred to as DC-SIGN(R)). Gp120 and gp41 interact with GalCer. Gp120 interacts with host ITGA4/ITGB7 complex; on CD4+ T-cells, this interaction results in rapid activation of integrin ITGAL/LFA-1, which facilitates efficient cell-to-cell spreading of HIV-1. Gp120 interacts with cell-associated heparan sulfate; this interaction increases virus infectivity on permissive cells and may be involved in infection of CD4- cells. As to quaternary structure, the mature envelope protein (Env) consists of a homotrimer of non-covalently associated gp120-gp41 heterodimers. The resulting complex protrudes from the virus surface as a spike. There seems to be as few as 10 spikes on the average virion. In terms of processing, highly glycosylated by host. The high number of glycan on the protein is reffered to as 'glycan shield' because it contributes to hide protein sequence from adaptive immune system. Palmitoylation of the transmembrane protein and of Env polyprotein (prior to its proteolytic cleavage) is essential for their association with host cell membrane lipid rafts. Palmitoylation is therefore required for envelope trafficking to classical lipid rafts, but not for viral replication. Post-translationally, specific enzymatic cleavages in vivo yield mature proteins. Envelope glycoproteins are synthesized as an inactive precursor that is heavily N-glycosylated and processed likely by host cell furin in the Golgi to yield the mature SU and TM proteins. The cleavage site between SU and TM requires the minimal sequence [KR]-X-[KR]-R. About 2 of the 9 disulfide bonds of gp41 are reduced by P4HB/PDI, following binding to CD4 receptor.

The protein resides in the virion membrane. The protein localises to the host cell membrane. It localises to the host endosome membrane. Functionally, oligomerizes in the host endoplasmic reticulum into predominantly trimers. In a second time, gp160 transits in the host Golgi, where glycosylation is completed. The precursor is then proteolytically cleaved in the trans-Golgi and thereby activated by cellular furin or furin-like proteases to produce gp120 and gp41. Attaches the virus to the host lymphoid cell by binding to the primary receptor CD4. This interaction induces a structural rearrangement creating a high affinity binding site for a chemokine coreceptor like CXCR4 and/or CCR5. Acts as a ligand for CD209/DC-SIGN and CLEC4M/DC-SIGNR, which are respectively found on dendritic cells (DCs), and on endothelial cells of liver sinusoids and lymph node sinuses. These interactions allow capture of viral particles at mucosal surfaces by these cells and subsequent transmission to permissive cells. HIV subverts the migration properties of dendritic cells to gain access to CD4+ T-cells in lymph nodes. Virus transmission to permissive T-cells occurs either in trans (without DCs infection, through viral capture and transmission), or in cis (following DCs productive infection, through the usual CD4-gp120 interaction), thereby inducing a robust infection. In trans infection, bound virions remain infectious over days and it is proposed that they are not degraded, but protected in non-lysosomal acidic organelles within the DCs close to the cell membrane thus contributing to the viral infectious potential during DCs' migration from the periphery to the lymphoid tissues. On arrival at lymphoid tissues, intact virions recycle back to DCs' cell surface allowing virus transmission to CD4+ T-cells. Its function is as follows. Acts as a class I viral fusion protein. Under the current model, the protein has at least 3 conformational states: pre-fusion native state, pre-hairpin intermediate state, and post-fusion hairpin state. During fusion of viral and target intracellular membranes, the coiled coil regions (heptad repeats) assume a trimer-of-hairpins structure, positioning the fusion peptide in close proximity to the C-terminal region of the ectodomain. The formation of this structure appears to drive apposition and subsequent fusion of viral and target cell membranes. Complete fusion occurs in host cell endosomes and is dynamin-dependent, however some lipid transfer might occur at the plasma membrane. The virus undergoes clathrin-dependent internalization long before endosomal fusion, thus minimizing the surface exposure of conserved viral epitopes during fusion and reducing the efficacy of inhibitors targeting these epitopes. Membranes fusion leads to delivery of the nucleocapsid into the cytoplasm. In Human immunodeficiency virus type 1 group M subtype B (isolate CDC-451) (HIV-1), this protein is Envelope glycoprotein gp160.